We begin with the raw amino-acid sequence, 107 residues long: Phosphoribosyl-ATP pyrophosphatase (107 aa).

It belongs to the PRA-PH family.

It is found in the cytoplasm. It catalyses the reaction 1-(5-phospho-beta-D-ribosyl)-ATP + H2O = 1-(5-phospho-beta-D-ribosyl)-5'-AMP + diphosphate + H(+). Its pathway is amino-acid biosynthesis; L-histidine biosynthesis; L-histidine from 5-phospho-alpha-D-ribose 1-diphosphate: step 2/9. In Mesorhizobium japonicum (strain LMG 29417 / CECT 9101 / MAFF 303099) (Mesorhizobium loti (strain MAFF 303099)), this protein is Phosphoribosyl-ATP pyrophosphatase (hisE).